The following is a 181-amino-acid chain: NADH-quinone oxidoreductase subunit B (181 aa).

The [4Fe-4S] cluster site is built by cysteine 45, cysteine 46, cysteine 111, and cysteine 140.

This sequence belongs to the complex I 20 kDa subunit family. NDH-1 is composed of 15 different subunits. Subunits NuoB, C, D, E, F, and G constitute the peripheral sector of the complex. The cofactor is [4Fe-4S] cluster.

Its subcellular location is the cell membrane. It carries out the reaction a quinone + NADH + 5 H(+)(in) = a quinol + NAD(+) + 4 H(+)(out). Its function is as follows. NDH-1 shuttles electrons from NADH, via FMN and iron-sulfur (Fe-S) centers, to quinones in the respiratory chain. The immediate electron acceptor for the enzyme in this species is believed to be a menaquinone. Couples the redox reaction to proton translocation (for every two electrons transferred, four hydrogen ions are translocated across the cytoplasmic membrane), and thus conserves the redox energy in a proton gradient. This is NADH-quinone oxidoreductase subunit B from Deinococcus radiodurans (strain ATCC 13939 / DSM 20539 / JCM 16871 / CCUG 27074 / LMG 4051 / NBRC 15346 / NCIMB 9279 / VKM B-1422 / R1).